The following is a 391-amino-acid chain: Polyketide synthase 5 (391 aa).

The active site involves Cys-164.

This sequence belongs to the thiolase-like superfamily. Chalcone/stilbene synthases family. Homodimer. As to expression, expressed in fruits.

It carries out the reaction (E)-4-coumaroyl-CoA + 3 malonyl-CoA + 3 H(+) = 2',4,4',6'-tetrahydroxychalcone + 3 CO2 + 4 CoA. It functions in the pathway secondary metabolite biosynthesis; flavonoid biosynthesis. Its function is as follows. Polyketide synthase producing naringenin chalcone. Can use p-coumaryl-CoA as substrate. In Rubus idaeus (Raspberry), this protein is Polyketide synthase 5 (PKS5).